Reading from the N-terminus, the 1634-residue chain is Protein TIC 214 (1634 aa).

5 helical membrane-spanning segments follow: residues 25-45 (FIIG…YVAL), 53-73 (ILAL…SFFA), 94-116 (HFIL…LITI), 133-153 (FAWF…LVWI), and 172-192 (IFVI…SIQC). Disordered regions lie at residues 216–242 (RERL…SESE) and 1365–1395 (QQKS…STKS). Over residues 1386–1395 (KYLEEDSTKS) the composition is skewed to basic and acidic residues.

Belongs to the TIC214 family. As to quaternary structure, part of the Tic complex.

Its subcellular location is the plastid. It localises to the chloroplast inner membrane. Involved in protein precursor import into chloroplasts. May be part of an intermediate translocation complex acting as a protein-conducting channel at the inner envelope. This Cuscuta exaltata (Tall dodder) protein is Protein TIC 214.